The chain runs to 299 residues: Bifunctional protein FolD 2 (299 aa).

Residues 168-170, Ser-193, and Ile-234 each bind NADP(+); that span reads GRS.

The protein belongs to the tetrahydrofolate dehydrogenase/cyclohydrolase family. As to quaternary structure, homodimer.

The catalysed reaction is (6R)-5,10-methylene-5,6,7,8-tetrahydrofolate + NADP(+) = (6R)-5,10-methenyltetrahydrofolate + NADPH. It catalyses the reaction (6R)-5,10-methenyltetrahydrofolate + H2O = (6R)-10-formyltetrahydrofolate + H(+). The protein operates within one-carbon metabolism; tetrahydrofolate interconversion. Functionally, catalyzes the oxidation of 5,10-methylenetetrahydrofolate to 5,10-methenyltetrahydrofolate and then the hydrolysis of 5,10-methenyltetrahydrofolate to 10-formyltetrahydrofolate. The protein is Bifunctional protein FolD 2 of Rhizobium meliloti (strain 1021) (Ensifer meliloti).